We begin with the raw amino-acid sequence, 398 residues long: Beta-1,6-galactosyltransferase GALT29A (398 aa).

The Cytoplasmic segment spans residues 1 to 6 (MKRSVR). Residues 7 to 27 (PLFSALLFAFFAATLICRVAI) form a helical; Signal-anchor for type II membrane protein membrane-spanning segment. Residues 28 to 398 (RRSSFSFASA…FKIPLVQVYH (371 aa)) lie on the Lumenal side of the membrane. Asn221 and Asn346 each carry an N-linked (GlcNAc...) asparagine glycan.

Belongs to the glycosyltransferase 29 family. Interacts with GALT31A.

The protein resides in the golgi apparatus membrane. Its function is as follows. Galactosyltransferase involved in the biosynthesis of type II arabinogalactan. Possesses galactosyltransferase (GalT) activity in vitro, transferring galactose from UDP-galactose to a mixture of various oligosaccharides derived from arabinogalactan proteins. Forms a complex with GALT31A that can work cooperatively to enhance the activities of adding galactose residues at O6 positions to beta-1,6-galactan and beta-1,3-galactan. The polypeptide is Beta-1,6-galactosyltransferase GALT29A (Arabidopsis thaliana (Mouse-ear cress)).